A 207-amino-acid chain; its full sequence is ATP synthase subunit b 2 (207 aa).

The chain crosses the membrane as a helical span at residues 58–78 (LLWLVITFGVFYLLMQKVIAP).

It belongs to the ATPase B chain family. F-type ATPases have 2 components, F(1) - the catalytic core - and F(0) - the membrane proton channel. F(1) has five subunits: alpha(3), beta(3), gamma(1), delta(1), epsilon(1). F(0) has three main subunits: a(1), b(2) and c(10-14). The alpha and beta chains form an alternating ring which encloses part of the gamma chain. F(1) is attached to F(0) by a central stalk formed by the gamma and epsilon chains, while a peripheral stalk is formed by the delta and b chains.

The protein resides in the cell inner membrane. In terms of biological role, f(1)F(0) ATP synthase produces ATP from ADP in the presence of a proton or sodium gradient. F-type ATPases consist of two structural domains, F(1) containing the extramembraneous catalytic core and F(0) containing the membrane proton channel, linked together by a central stalk and a peripheral stalk. During catalysis, ATP synthesis in the catalytic domain of F(1) is coupled via a rotary mechanism of the central stalk subunits to proton translocation. Component of the F(0) channel, it forms part of the peripheral stalk, linking F(1) to F(0). The b'-subunit is a diverged and duplicated form of b found in plants and photosynthetic bacteria. The polypeptide is ATP synthase subunit b 2 (atpF2) (Rhizobium johnstonii (strain DSM 114642 / LMG 32736 / 3841) (Rhizobium leguminosarum bv. viciae)).